Here is a 609-residue protein sequence, read N- to C-terminus: MAFSKKTRQEAITKIQNEEMDLLVIGGGITGAGLTLQAAAAGMKVAVLEMQDFSEGTSSRSTKLVHGGIRYLKNFDVEVVSDTVSERAVVQGIAPHIPKPDPMLLPIYDDEGKTTFDMFSVKIAMDLYDRLAGVDEDSPYANYTISPEEVLRREPLIKKKGLQGAGVYLDYRNNDARLVIDNIKKAVEDGAQAISKMKVIDFIYTDGQISGIRARDLLTDQVIEVKAKLVINTSGPWVDKIRYLNFTRPIVPKMRPTKGVHLVVDAAKLPVPQPTYFDTGKHDKRMVFAIPRENKTYFGTTDTDYHGDFTDPKVTQEDVDYLLDVINFRYPEANITINDIEASWAGLRPLLGGNSGSDYNGGDNGAVSETSFNAVVEAVLRYKNKTATKAEVEHLLNNMESSLSEKGDAPSSVSRGSSLERESDGLITLAGGKITDYRKMAAGAMELICQLLEEDFGLKYEPIDSKKYQISGGEFDPTKVEEVVAENMKVGVAAGLTEEEAKYIADFYGMNALQVFAYASEMEAYEGLSLAESARLCYALEDEMILTPVDYLLRRTNHILFMREGVDAIKVHVVNAMADDLGWSAEEKAEQEKALEEALRESDLSDLKK.

21-49 is a binding site for FAD; that stretch reads DLLVIGGGITGAGLTLQAAAAGMKVAVLE.

This sequence belongs to the FAD-dependent glycerol-3-phosphate dehydrogenase family. FAD serves as cofactor.

It localises to the cytoplasm. The catalysed reaction is sn-glycerol 3-phosphate + O2 = dihydroxyacetone phosphate + H2O2. This Lactococcus lactis subsp. lactis (strain IL1403) (Streptococcus lactis) protein is Alpha-glycerophosphate oxidase (glpO).